The following is a 221-amino-acid chain: Chaperone protein TorD (221 aa).

Belongs to the TorD/DmsD family. TorD subfamily.

The protein resides in the cytoplasm. In terms of biological role, involved in the biogenesis of TorA. Acts on TorA before the insertion of the molybdenum cofactor and, as a result, probably favors a conformation of the apoenzyme that is competent for acquiring the cofactor. This chain is Chaperone protein TorD, found in Psychrobacter sp. (strain PRwf-1).